The primary structure comprises 353 residues: Mitogen-activated protein kinase FUS3 (353 aa).

Residues 13–309 enclose the Protein kinase domain; sequence FQLKSLLGEG…AKEALEHPYL (297 aa). ATP contacts are provided by residues 19-27 and Lys-42; that span reads LGEGAYGVV. Asp-137 functions as the Proton acceptor in the catalytic mechanism. Residue Thr-180 is modified to Phosphothreonine. Residues 180 to 182 carry the TXY motif; sequence TEY. Tyr-182 bears the Phosphotyrosine mark. Residue Lys-345 forms a Glycyl lysine isopeptide (Lys-Gly) (interchain with G-Cter in ubiquitin) linkage.

Belongs to the protein kinase superfamily. CMGC Ser/Thr protein kinase family. MAP kinase subfamily. As to quaternary structure, in the nucleus, FUS3 forms a complex with DIG1, DIG2 and STE12. The interaction of FUS3 with STE12 depends on the presence of both DIG1 and DIG2. STE12 is lost from FUS3/DIG1/DIG2 complex after pheromone treatment. During its activation and phosphorylation, FUS3 forms a membrane-associated complex with the scaffold protein STE5, the MAPKK STE7, the MAPKKK STE11, and the G-protein beta subunit GBB/STE4; interacting directly with STE7 and STE5. It depends on Mg(2+) as a cofactor. In terms of processing, dually phosphorylated on Thr-180 and Tyr-182 by STE7 in response to pheromone induction, which activates the enzyme. Activated FUS3 initiates a feedback signal, down-regulating phosphorylation of both, FUS3 and KSS1.

It localises to the nucleus. It is found in the cytoplasm. The protein localises to the periplasm. The catalysed reaction is L-seryl-[protein] + ATP = O-phospho-L-seryl-[protein] + ADP + H(+). It catalyses the reaction L-threonyl-[protein] + ATP = O-phospho-L-threonyl-[protein] + ADP + H(+). Activated by tyrosine and threonine phosphorylation after pheromone treatment. Its function is as follows. Together with closely related KSS1, FUS3 is the final kinase in the signal transduction cascade regulating activation/repression of the mating and filamentation pathways, induced by pheromone and nitrogen/carbon limitation, respectively. Phosphorylated FUS3 activates the mating but suppresses the filamentation pathway, whereas activated KSS1 activates both pathways. Pheromone-activated FUS3 functions by inhibiting the binding of the transcriptional activator STE12 to filamentation specific genes while inducing its binding to and activity at mating specific genes. Non-activated FUS3 has a repressive effect on STE12 transcriptional activity. KSS1 can partially compensate for the lack of FUS3 but mating efficiency is reduced and the filamentation program is partially activated upon pheromone signaling. FUS3 phosphorylates STE7, STE5, FAR1, DIG1, DIG2 and STE12. The protein is Mitogen-activated protein kinase FUS3 (FUS3) of Saccharomyces cerevisiae (strain ATCC 204508 / S288c) (Baker's yeast).